Reading from the N-terminus, the 307-residue chain is N-acetylmuramic acid 6-phosphate etherase (307 aa).

The region spanning 59-222 is the SIS domain; the sequence is TTKALSQGGK…STGVMVRLGK (164 aa). Glu87 serves as the catalytic Proton donor. Glu118 is a catalytic residue.

The protein belongs to the GCKR-like family. MurNAc-6-P etherase subfamily. In terms of assembly, homodimer.

It catalyses the reaction N-acetyl-D-muramate 6-phosphate + H2O = N-acetyl-D-glucosamine 6-phosphate + (R)-lactate. It participates in amino-sugar metabolism; N-acetylmuramate degradation. In terms of biological role, specifically catalyzes the cleavage of the D-lactyl ether substituent of MurNAc 6-phosphate, producing GlcNAc 6-phosphate and D-lactate. The protein is N-acetylmuramic acid 6-phosphate etherase of Trichodesmium erythraeum (strain IMS101).